We begin with the raw amino-acid sequence, 159 residues long: Phosphopantetheine adenylyltransferase (159 aa).

Thr10 contacts substrate. ATP contacts are provided by residues 10 to 11 (TF) and His18. Substrate is bound by residues Lys42, Leu74, and Arg88. ATP is bound by residues 89–91 (GLR), Glu99, and 124–130 (NSFISST).

This sequence belongs to the bacterial CoaD family. Homohexamer. Mg(2+) is required as a cofactor.

The protein localises to the cytoplasm. The enzyme catalyses (R)-4'-phosphopantetheine + ATP + H(+) = 3'-dephospho-CoA + diphosphate. Its pathway is cofactor biosynthesis; coenzyme A biosynthesis; CoA from (R)-pantothenate: step 4/5. In terms of biological role, reversibly transfers an adenylyl group from ATP to 4'-phosphopantetheine, yielding dephospho-CoA (dPCoA) and pyrophosphate. This chain is Phosphopantetheine adenylyltransferase, found in Shewanella halifaxensis (strain HAW-EB4).